We begin with the raw amino-acid sequence, 240 residues long: 2,3,4,5-tetrahydropyridine-2,6-dicarboxylate N-acetyltransferase (240 aa).

The protein belongs to the transferase hexapeptide repeat family. DapH subfamily.

It carries out the reaction (S)-2,3,4,5-tetrahydrodipicolinate + acetyl-CoA + H2O = L-2-acetamido-6-oxoheptanedioate + CoA. It functions in the pathway amino-acid biosynthesis; L-lysine biosynthesis via DAP pathway; LL-2,6-diaminopimelate from (S)-tetrahydrodipicolinate (acetylase route): step 1/3. Catalyzes the transfer of an acetyl group from acetyl-CoA to tetrahydrodipicolinate. The chain is 2,3,4,5-tetrahydropyridine-2,6-dicarboxylate N-acetyltransferase from Bacillus cereus (strain G9842).